The chain runs to 862 residues: Leucine--tRNA ligase (862 aa).

Residues 42–52 (PYPSGKIHIGH) carry the 'HIGH' region motif. The short motif at 614–618 (KMSKS) is the 'KMSKS' region element. Lys617 provides a ligand contact to ATP.

Belongs to the class-I aminoacyl-tRNA synthetase family.

It localises to the cytoplasm. It catalyses the reaction tRNA(Leu) + L-leucine + ATP = L-leucyl-tRNA(Leu) + AMP + diphosphate. This is Leucine--tRNA ligase from Syntrophus aciditrophicus (strain SB).